The primary structure comprises 790 residues: Probable copper-transporting ATPase SynA (790 aa).

Residues 1–105 (MPAAIVHSAD…IPPLQQQRLQ (105 aa)) are Cytoplasmic-facing. The HMA domain maps to 14–81 (TSILVEVEGM…EITGLGFRAQ (68 aa)). Residues Cys25 and Cys28 each contribute to the Cu(+) site. A helical membrane pass occupies residues 106-127 (LAIAAFLLIVSSWGHLGHWLDH). At 128–136 (PLPGTDQLW) the chain is on the extracellular side. The helical transmembrane segment at 137–156 (FHALLATWALLGPGRSILQA) threads the bilayer. The Cytoplasmic portion of the chain corresponds to 157–163 (GWQGLRC). A helical membrane pass occupies residues 164–184 (GAPNMNSLVLLGTGSAYLASL). Residues 185–198 (VALLWPQLGWVCFF) are Extracellular-facing. The helical transmembrane segment at 199-219 (DEPVMLLGFILLGRTLEEQAR) threads the bilayer. Residues 220 to 358 (FRSQAALQNL…KAPVQRFADA (139 aa)) are Cytoplasmic-facing. A helical transmembrane segment spans residues 359-381 (IAGRFVYGVCAIAALTFGFWATL). Over 382 to 420 (GSRWWPQVLQQPLPGLLIHAPHHGMEMAHPHSHSPLLLA) the chain is Extracellular. The helical transmembrane segment at 421 to 438 (LTLAISVLVVACPCALGL) threads the bilayer. The Cytoplasmic portion of the chain corresponds to 439–723 (ATPTAILVAT…NLSQMGLRTI (285 aa)). The active-site 4-aspartylphosphate intermediate is the Asp476. Residues Asp669 and Asp673 each contribute to the Mg(2+) site. A helical membrane pass occupies residues 724-743 (RQNLTWALGYNVVMLPLAAG). Residues 744–755 (AFLPAYGLALTP) are Extracellular-facing. The chain crosses the membrane as a helical span at residues 756–774 (AIAGACMAVSSLAVVSNSL). Residues 775–790 (LLRYWFRRSLNHSVSV) lie on the Cytoplasmic side of the membrane.

Belongs to the cation transport ATPase (P-type) (TC 3.A.3) family. Type IB subfamily.

The protein localises to the cell membrane. It carries out the reaction Cu(+)(in) + ATP + H2O = Cu(+)(out) + ADP + phosphate + H(+). Its function is as follows. Involved in copper transport. This is Probable copper-transporting ATPase SynA (synA) from Synechococcus elongatus (strain ATCC 33912 / PCC 7942 / FACHB-805) (Anacystis nidulans R2).